Reading from the N-terminus, the 428-residue chain is Histone-lysine N-methyltransferase SMYD3 (428 aa).

N-acetylmethionine is present on Met1. An SET domain is found at 4-240 (LKVEKFTTAN…AGEELTICYL (237 aa)). Residue 14–16 (RGN) coordinates S-adenosyl-L-methionine. 8 residues coordinate Zn(2+): Cys49, Cys52, Cys62, Cys65, Cys71, Cys75, His83, and Cys87. The segment at 49–87 (CDRCLLGKEKLMRCSQCRIAKYCSAKCQKKAWPDHRREC) adopts an MYND-type zinc-finger fold. Residues Tyr124, Asn132, 205-206 (NH), Tyr239, and Phe259 contribute to the S-adenosyl-L-methionine site. Residues 272–428 (DADMLTGDEQ…EECDANIRAS (157 aa)) form a C-terminal domain; essential for histone methyltransferase activity, nuclear localization and mediates interaction with HSP90AA1 region.

Belongs to the class V-like SAM-binding methyltransferase superfamily. Histone-lysine methyltransferase family. In terms of assembly, interacts with HSPCA. Interacts with HELZ. Interacts with POLR2A; the interaction may be indirect and may be mediated by HELZ. Interacts with HSP90AA1; this interaction enhances SMYD3 histone-lysine N-methyltransferase.

The protein resides in the cytoplasm. Its subcellular location is the nucleus. The enzyme catalyses L-lysyl(4)-[histone H3] + 3 S-adenosyl-L-methionine = N(6),N(6),N(6)-trimethyl-L-lysyl(4)-[histone H3] + 3 S-adenosyl-L-homocysteine + 3 H(+). With respect to regulation, histone methyltransferase activity strongly stimulated by HSPCA. Histone methyltransferase. Specifically methylates 'Lys-4' of histone H3, inducing di- and tri-methylation, but not monomethylation. Also methylates 'Lys-5' of histone H4. Plays an important role in transcriptional activation as a member of an RNA polymerase complex. Binds DNA containing 5'-CCCTCC-3' or 5'-GAGGGG-3' sequences. The sequence is that of Histone-lysine N-methyltransferase SMYD3 (Smyd3) from Mus musculus (Mouse).